The following is a 1029-amino-acid chain: Sodium/potassium-transporting ATPase subunit alpha-4 (1029 aa).

A disordered region spans residues 1-37 (MGLWGKKGTVAPHDQSPRRRPKKGLIKKKMVKREKQK). Residues 1-95 (MGLWGKKGTV…NTVTPPPTTP (95 aa)) are Cytoplasmic-facing. Residues 18–36 (RRRPKKGLIKKKMVKREKQ) are compositionally biased toward basic residues. Residues 90 to 92 (PPP) form an interaction with phosphoinositide-3 kinase region. The helical transmembrane segment at 96–116 (EWVKFCKQLFGGFSLLLWTGA) threads the bilayer. Topologically, residues 117-139 (ILCFVAYSIQIYFNEEPTKDNLY) are extracellular. The chain crosses the membrane as a helical span at residues 140–160 (LSIVLSVVVIVTGCFSYYQEA). Residues 161–296 (KSSKIMESFK…VGQTPIAAEI (136 aa)) are Cytoplasmic-facing. The segment covering 223–237 (NSSLTGESEPQSRSP) has biased composition (polar residues). Residues 223–242 (NSSLTGESEPQSRSPDFTHE) are disordered. Residues 297–316 (EHFIHLITVVAVFLGVTFFA) traverse the membrane as a helical segment. The Extracellular segment spans residues 317-328 (LSLLLGYGWLEA). The chain crosses the membrane as a helical span at residues 329 to 346 (IIFLIGIIVANVPEGLLA). The Cytoplasmic segment spans residues 347-778 (TVTVCLTLTA…EEGRLIFDNL (432 aa)). Asp-384 acts as the 4-aspartylphosphate intermediate in catalysis. Residues Asp-723 and Asp-727 each coordinate Mg(2+). A helical membrane pass occupies residues 779–798 (KKSIMYTLTSNIPEITPFLM). Residues 799–808 (FIILGIPLPL) lie on the Extracellular side of the membrane. A helical membrane pass occupies residues 809-829 (GTITILCIDLGTDMVPAISLA). Residues 830–849 (YESAESDIMKRLPRNPKTDN) are Cytoplasmic-facing. The chain crosses the membrane as a helical span at residues 850–872 (LVNHRLIGMAYGQIGMIQALAGF). Over 873 to 924 (FTYFVILAENGFRPVDLLGIRLHWEDKYLNDLEDSYGQQWTYEQRKVVEFTC) the chain is Extracellular. A helical membrane pass occupies residues 925-944 (QTAFFVTIVVVQWADLIISK). Residues 945 to 957 (TRRNSLFQQGMRN) lie on the Cytoplasmic side of the membrane. Position 949 is a phosphoserine; by PKA (Ser-949). The chain crosses the membrane as a helical span at residues 958–976 (KVLIFGILEETLLAAFLSY). Residues 977–991 (TPGMDVALRMYPLKI) are Extracellular-facing. Residues 992–1012 (TWWLCAIPYSILIFVYDEIRK) form a helical membrane-spanning segment. At 1013-1029 (LLIRQHPDGWVERETYY) the chain is on the cytoplasmic side.

Belongs to the cation transport ATPase (P-type) (TC 3.A.3) family. Type IIC subfamily. In terms of assembly, the sodium/potassium-transporting ATPase is composed of a catalytic alpha subunit, an auxiliary non-catalytic beta subunit and an additional regulatory subunit. In terms of tissue distribution, specifically expressed in testis. Found in very low levels in skeletal muscle. Expressed in mature sperm (at protein level).

It localises to the cell membrane. The enzyme catalyses K(+)(out) + Na(+)(in) + ATP + H2O = K(+)(in) + Na(+)(out) + ADP + phosphate + H(+). Its activity is regulated as follows. Specifically inhibited by an endogenous cardiac glycoside, ouabain. In terms of biological role, this is the catalytic component of the active enzyme, which catalyzes the hydrolysis of ATP coupled with the exchange of sodium and potassium ions across the plasma membrane. This action creates the electrochemical gradient of sodium and potassium ions, providing the energy for active transport of various nutrients. Plays a role in sperm motility. The polypeptide is Sodium/potassium-transporting ATPase subunit alpha-4 (Homo sapiens (Human)).